We begin with the raw amino-acid sequence, 191 residues long: Probable protein-S-isoprenylcysteine O-methyltransferase (191 aa).

Helical transmembrane passes span W8 to F28, Y45 to E65, and L66 to I86. Residues H110–I113, Y118, and H123–Y126 each bind S-adenosyl-L-methionine. The helical transmembrane segment at F129 to F149 threads the bilayer. A substrate-binding site is contributed by R160. E164 is a binding site for S-adenosyl-L-methionine.

The protein belongs to the class VI-like SAM-binding methyltransferase superfamily. Isoprenylcysteine carboxyl methyltransferase family. The cofactor is Zn(2+).

It is found in the endoplasmic reticulum membrane. The enzyme catalyses [protein]-C-terminal S-[(2E,6E)-farnesyl]-L-cysteine + S-adenosyl-L-methionine = [protein]-C-terminal S-[(2E,6E)-farnesyl]-L-cysteine methyl ester + S-adenosyl-L-homocysteine. Functionally, catalyzes the post-translational methylation of isoprenylated C-terminal cysteine residues. Carboxyl methylation is a reversible and potentially regulated step in the post-translational modification of prenylated proteins. In Oryza sativa subsp. indica (Rice), this protein is Probable protein-S-isoprenylcysteine O-methyltransferase (ICMT).